Here is a 459-residue protein sequence, read N- to C-terminus: Methylenetetrahydrofolate--tRNA-(uracil-5-)-methyltransferase TrmFO (459 aa).

11 to 16 is an FAD binding site; it reads GAGLAG.

This sequence belongs to the MnmG family. TrmFO subfamily. It depends on FAD as a cofactor.

The protein localises to the cytoplasm. It carries out the reaction uridine(54) in tRNA + (6R)-5,10-methylene-5,6,7,8-tetrahydrofolate + NADH + H(+) = 5-methyluridine(54) in tRNA + (6S)-5,6,7,8-tetrahydrofolate + NAD(+). The catalysed reaction is uridine(54) in tRNA + (6R)-5,10-methylene-5,6,7,8-tetrahydrofolate + NADPH + H(+) = 5-methyluridine(54) in tRNA + (6S)-5,6,7,8-tetrahydrofolate + NADP(+). Its function is as follows. Catalyzes the folate-dependent formation of 5-methyl-uridine at position 54 (M-5-U54) in all tRNAs. The chain is Methylenetetrahydrofolate--tRNA-(uracil-5-)-methyltransferase TrmFO from Synechococcus sp. (strain CC9311).